The sequence spans 410 residues: Iron-sulfur cluster assembly SufBD family protein MTH1150 homolog (410 aa).

This sequence belongs to the iron-sulfur cluster assembly SufBD family.

The protein is Iron-sulfur cluster assembly SufBD family protein MTH1150 homolog of Methanothermobacter thermautotrophicus (strain Winter) (Methanobacterium thermoautotrophicum).